The following is a 393-amino-acid chain: Calreticulin (393 aa).

An N-terminal signal peptide occupies residues 1–16 (MLSILLTLLLSKYALG). An N-linked (GlcNAc...) asparagine glycan is attached at N27. A disulfide bridge connects residues C103 and C135. An alpha-D-glucoside contacts are provided by Y107, K109, Y126, and D133. Repeat copies occupy residues 189 to 200 (VEEGSLEDDWDM), 208 to 219 (DPNDKKPDDWVD), 225 to 236 (DPDDKKPDNWDQ), 242 to 253 (DMDAKKPDDWDD), 257 to 267 (GEWERPQKDNP), 271 to 281 (GEWTPRRIDNP), and 285 to 295 (GEWKPVQIDNP). The interval 189–253 (VEEGSLEDDW…DAKKPDDWDD (65 aa)) is 4 X 12 AA approximate repeats. A disordered region spans residues 194 to 277 (LEDDWDMLPP…EYKGEWTPRR (84 aa)). Residues 202-216 (PPKKIDDPNDKKPDD) show a composition bias toward basic and acidic residues. Positions 217–226 (WVDEQFIDDP) are enriched in acidic residues. Composition is skewed to basic and acidic residues over residues 227–249 (DDKK…KKPD) and 258–277 (EWER…TPRR). The tract at residues 257–295 (GEWERPQKDNPEYKGEWTPRRIDNPKYKGEWKPVQIDNP) is 3 X 11 AA approximate repeats. Residue D315 coordinates an alpha-D-glucoside. Positions 351–393 (AEVAKEQSSAKDDKEEAEETKERKELPYDAKASDEPSGDHDEL) are disordered. A Prevents secretion from ER motif is present at residues 390 to 393 (HDEL).

It belongs to the calreticulin family.

The protein localises to the endoplasmic reticulum lumen. Functionally, molecular calcium-binding chaperone promoting folding, oligomeric assembly and quality control in the ER via the calreticulin/calnexin cycle. This lectin may interact transiently with almost all of the monoglucosylated glycoproteins that are synthesized in the ER. The protein is Calreticulin of Schistosoma mansoni (Blood fluke).